The following is a 77-amino-acid chain: Coiled-coil-helix-coiled-coil-helix domain-containing protein C550.01c (77 aa).

One can recognise a CHCH domain in the interval 24–65 (KGGCVEEHLRLNDCYWDTHDWRKCTEQMEEFRKCWEKRHGPL). 2 consecutive short sequence motifs (cx9C motif) follow at residues 27 to 37 (CVEEHLRLNDC) and 47 to 57 (CTEQMEEFRKC). Disulfide bonds link C27/C57 and C37/C47.

It is found in the cytoplasm. It localises to the nucleus. This chain is Coiled-coil-helix-coiled-coil-helix domain-containing protein C550.01c, found in Schizosaccharomyces pombe (strain 972 / ATCC 24843) (Fission yeast).